Reading from the N-terminus, the 135-residue chain is Kappa-casein (135 aa).

O-linked (GalNAc...) threonine glycosylation is present at threonine 96. Residue serine 114 is modified to Phosphoserine; alternate. An O-linked (GalNAc...) serine; alternate glycan is attached at serine 114. Threonine 131 carries O-linked (GalNAc...) threonine glycosylation. At serine 132 the chain carries Phosphoserine.

This sequence belongs to the kappa-casein family. As to expression, mammary gland specific. Secreted in milk.

The protein localises to the secreted. Its function is as follows. Kappa-casein stabilizes micelle formation, preventing casein precipitation in milk. This Equus grevyi (Grevy's zebra) protein is Kappa-casein (CSN3).